We begin with the raw amino-acid sequence, 215 residues long: Cytochrome b6 (215 aa).

A helical membrane pass occupies residues 32 to 52 (IFYCLGGITFTCFLVQVATGF). Residue C35 participates in heme c binding. Residues H86 and H100 each contribute to the heme b site. Helical transmembrane passes span 90 to 110 (ASMM…TGGF), 116 to 136 (STWI…VTGY), and 186 to 206 (LHTF…FLMI). The heme b site is built by H187 and H202.

Belongs to the cytochrome b family. PetB subfamily. The 4 large subunits of the cytochrome b6-f complex are cytochrome b6, subunit IV (17 kDa polypeptide, PetD), cytochrome f and the Rieske protein, while the 4 small subunits are PetG, PetL, PetM and PetN. The complex functions as a dimer. Heme b serves as cofactor. It depends on heme c as a cofactor.

The protein localises to the plastid. It is found in the chloroplast thylakoid membrane. Functionally, component of the cytochrome b6-f complex, which mediates electron transfer between photosystem II (PSII) and photosystem I (PSI), cyclic electron flow around PSI, and state transitions. The protein is Cytochrome b6 of Tetradesmus obliquus (Green alga).